We begin with the raw amino-acid sequence, 20 residues long: Fibrinogen beta chain (20 aa).

Position 5 is a sulfotyrosine (tyrosine 5).

In terms of assembly, heterohexamer; disulfide linked. Contains 2 sets of 3 non-identical chains (alpha, beta and gamma). The 2 heterotrimers are in head to head conformation with the N-termini in a small central domain. Conversion of fibrinogen to fibrin is triggered by thrombin, which cleaves fibrinopeptides A and B from alpha and beta chains, and thus exposes the N-terminal polymerization sites responsible for the formation of the soft clot.

Its subcellular location is the secreted. Its function is as follows. Cleaved by the protease thrombin to yield monomers which, together with fibrinogen alpha (FGA) and fibrinogen gamma (FGG), polymerize to form an insoluble fibrin matrix. Fibrin has a major function in hemostasis as one of the primary components of blood clots. In addition, functions during the early stages of wound repair to stabilize the lesion and guide cell migration during re-epithelialization. Was originally thought to be essential for platelet aggregation, based on in vitro studies using anticoagulated blood. However subsequent studies have shown that it is not absolutely required for thrombus formation in vivo. Enhances expression of SELP in activated platelets. Maternal fibrinogen is essential for successful pregnancy. Fibrin deposition is also associated with infection, where it protects against IFNG-mediated hemorrhage. May also facilitate the antibacterial immune response via both innate and T-cell mediated pathways. The protein is Fibrinogen beta chain (FGB) of Capra hircus (Goat).